A 325-amino-acid chain; its full sequence is Elongation factor P--(R)-beta-lysine ligase (325 aa).

76–78 is a binding site for substrate; sequence SPE. ATP contacts are provided by residues 100-102 and Asn109; that span reads RNE. Residue Tyr118 participates in substrate binding. 244–245 serves as a coordination point for ATP; it reads EL. Substrate is bound at residue Glu251. Gly300 provides a ligand contact to ATP.

Belongs to the class-II aminoacyl-tRNA synthetase family. EpmA subfamily. As to quaternary structure, homodimer.

It carries out the reaction D-beta-lysine + L-lysyl-[protein] + ATP = N(6)-((3R)-3,6-diaminohexanoyl)-L-lysyl-[protein] + AMP + diphosphate + H(+). With EpmB is involved in the beta-lysylation step of the post-translational modification of translation elongation factor P (EF-P). Catalyzes the ATP-dependent activation of (R)-beta-lysine produced by EpmB, forming a lysyl-adenylate, from which the beta-lysyl moiety is then transferred to the epsilon-amino group of a conserved specific lysine residue in EF-P. This is Elongation factor P--(R)-beta-lysine ligase from Erwinia tasmaniensis (strain DSM 17950 / CFBP 7177 / CIP 109463 / NCPPB 4357 / Et1/99).